Reading from the N-terminus, the 752-residue chain is Glutamate carboxypeptidase 2 (752 aa).

The Cytoplasmic segment spans residues methionine 1–arginine 19. Serine 10 carries the post-translational modification Phosphoserine. Residues tryptophan 20 to isoleucine 44 form a helical; Signal-anchor for type II membrane protein membrane-spanning segment. Topologically, residues lysine 45 to aspartate 752 are extracellular. N-linked (GlcNAc...) asparagine glycans are attached at residues asparagine 48, asparagine 78, asparagine 123, asparagine 155, and asparagine 197. Residues arginine 212 and asparagine 259 each contribute to the substrate site. Ca(2+) is bound by residues threonine 271 and tyrosine 274. Residues alanine 276–leucine 589 form an NAALADase region. N-linked (GlcNAc...) asparagine glycosylation is present at asparagine 338. 2 residues coordinate Zn(2+): histidine 379 and aspartate 389. Position 426 (glutamate 426) interacts with substrate. The Nucleophile; for NAALADase activity role is filled by glutamate 426. Glutamate 427 is a binding site for Zn(2+). Residues glutamate 435 and glutamate 438 each contribute to the Ca(2+) site. Zn(2+) is bound at residue aspartate 455. N-linked (GlcNAc...) asparagine glycosylation is found at asparagine 461 and asparagine 478. Residues serine 519 to glycine 520, asparagine 521, arginine 536 to arginine 538, tyrosine 554, and tyrosine 554 to histidine 555 contribute to the substrate site. A Zn(2+)-binding site is contributed by histidine 555. Asparagine 615 carries N-linked (GlcNAc...) asparagine glycosylation. Catalysis depends on serine 630, which acts as the Charge relay system. N-linked (GlcNAc...) asparagine glycosylation is present at asparagine 640. Catalysis depends on charge relay system residues aspartate 668 and histidine 691. Residue lysine 701–tyrosine 702 coordinates substrate.

The protein belongs to the peptidase M28 family. M28B subfamily. In terms of assembly, homodimer. It depends on Zn(2+) as a cofactor. Widely expressed throughout brain regions with highest levels in the hippocampus, dentate gyrus, priform cortex, choroid plexus of ventricles, pineal gland, anterior lobe of the pituitary gland and supraoptic nucleus. High levels also found in the cerebral cortex, substantia nigra, pontine nucleus and the granule cell layer of cerebellum. Highly expressed in astrocytes and non-myelinating Schwann cells. Also expressed in kidney, localizing to the proximal brush border of the renal tube.

The protein resides in the cell membrane. The catalysed reaction is Release of an unsubstituted, C-terminal glutamyl residue, typically from Ac-Asp-Glu or folylpoly-gamma-glutamates.. The NAALADase activity is inhibited by beta-NAAG, quisqualic acid and 2-(phosphonomethyl)glutaric acid (PMG). In terms of biological role, has both folate hydrolase and N-acetylated-alpha-linked-acidic dipeptidase (NAALADase) activity. Has a preference for tri-alpha-glutamate peptides. In the intestine, required for the uptake of folate. In the brain, modulates excitatory neurotransmission through the hydrolysis of the neuropeptide, N-aceylaspartylglutamate (NAAG), thereby releasing glutamate. Functionally, also exhibits a dipeptidyl-peptidase IV type activity. In vitro, cleaves Gly-Pro-AMC. The polypeptide is Glutamate carboxypeptidase 2 (Folh1) (Rattus norvegicus (Rat)).